The primary structure comprises 656 residues: Protein EMBRYO SAC DEVELOPMENT ARREST 30 (656 aa).

A helical; Signal-anchor for type II membrane protein membrane pass occupies residues 9–29; that stretch reads WIALFVLILSMGSLVVHLSMT. The N-linked (GlcNAc...) asparagine glycan is linked to asparagine 119. The disordered stretch occupies residues 381–426; the sequence is LSELVGPETPLPENTYKMPPRKSDKQLKEEWNKAGPRPRPLPPPPD. The span at 401 to 412 shows a compositional bias: basic and acidic residues; it reads RKSDKQLKEEWN. Residues 417-426 are compositionally biased toward pro residues; sequence RPRPLPPPPD. N-linked (GlcNAc...) asparagine glycans are attached at residues asparagine 444, asparagine 522, asparagine 534, and asparagine 544. A disordered region spans residues 631–656; sequence SETEEEFAKSKVASAFDQDEEWDPND. The span at 647–656 shows a compositional bias: acidic residues; that stretch reads DQDEEWDPND.

It belongs to the glycosyltransferase GT106 family.

Its subcellular location is the membrane. It participates in glycan metabolism. The polypeptide is Protein EMBRYO SAC DEVELOPMENT ARREST 30 (Arabidopsis thaliana (Mouse-ear cress)).